Here is a 354-residue protein sequence, read N- to C-terminus: Heat-inducible transcription repressor HrcA (354 aa).

This sequence belongs to the HrcA family.

Its function is as follows. Negative regulator of class I heat shock genes (grpE-dnaK-dnaJ and groELS operons). Prevents heat-shock induction of these operons. The protein is Heat-inducible transcription repressor HrcA of Herpetosiphon aurantiacus (strain ATCC 23779 / DSM 785 / 114-95).